Here is a 1311-residue protein sequence, read N- to C-terminus: Clustered mitochondria protein homolog (1311 aa).

The span at 1–18 (MAEKTNGAAAPNGAADAP) shows a compositional bias: low complexity. Positions 1–27 (MAEKTNGAAAPNGAADAPKSSPEQAQD) are disordered. Positions 324 to 568 (DITRTQESFL…RITPLDVSWQ (245 aa)) constitute a Clu domain. A TPR 1 repeat occupies 491–525 (IDYGAVDGKDLVATDERFVPQFQKLSKALKVKPHA). The span at 606–630 (SEVAKRGQAKKDQAAVEEKKEAKAE) shows a compositional bias: basic and acidic residues. Disordered stretches follow at residues 606–694 (SEVA…SSDR) and 925–966 (PAPV…SSTI). A compositionally biased stretch (acidic residues) spans 631 to 661 (SEEDSDSSSEEESSSDESDSEESSSDEDEEE). Residues 665–675 (PKKKSVPKKAA) are compositionally biased toward basic residues. Positions 676 to 694 (KKEEVKEEKKDEKEASSDR) are enriched in basic and acidic residues. 3 TPR repeats span residues 1034–1067 (ARVY…AERT), 1076–1109 (LLDY…WKII), and 1118–1151 (ITTI…CEVV). The span at 1276-1286 (LKFIEGTDKQK) shows a compositional bias: basic and acidic residues. Residues 1276–1311 (LKFIEGTDKQKKPAAKKRTGRANPKRRGAEPVSTKA) are disordered. A compositionally biased stretch (basic residues) spans 1287–1301 (KPAAKKRTGRANPKR).

This sequence belongs to the CLU family. May associate with the eukaryotic translation initiation factor 3 (eIF-3) complex.

The protein localises to the cytoplasm. MRNA-binding protein involved in proper cytoplasmic distribution of mitochondria. This Pyricularia oryzae (strain 70-15 / ATCC MYA-4617 / FGSC 8958) (Rice blast fungus) protein is Clustered mitochondria protein homolog.